We begin with the raw amino-acid sequence, 444 residues long: E1B 55 kDa protein (444 aa).

The disordered stretch occupies residues 1–42; sequence MEQDSDLESGRATNQRPPRVRVRGAGVRGRGRVRRRALSEGQ. Residues Ser438 and Ser439 each carry the phosphoserine modification.

Belongs to the adenoviridae E1B 55 kDa protein family. As to quaternary structure, interacts with host PML-4 and PML-5; this interaction promotes efficient subnuclear targeting of E1B-55K to PML nuclear bodies. Interacts with E4-ORF3 protein. Interacts with E4-ORF6 protein.

It localises to the host nucleus. The protein localises to the host cytoplasm. In terms of biological role, plays a major role to prevent cellular inhibition of viral genome replication. Assembles an SCF-like E3 ubiquitin ligase complex based on the cellular proteins ELOB, ELOC, CUL5 and RBX1, in cooperation with viral E4orf6. This viral RING-type ligase ubiquitinates cellular substrates and targets them to proteasomal degradation: TP53/p53, LIG4, MRE11-RAD50-NBS1 (MRN) complex, ITGA3, DAXX and BLM. E1B-55K probably acts as the substrate-specific adapter of the SCF-like E3 ubiquitin ligase complex. Degradation of host TP53/p53 activity is essential for preventing E1A-induced TP53 accumulation that would otherwise lead to cell apoptosis and growth arrest. E1B-55K also inactivates TP53 transcription-factor activity by binding its transactivation domain. E1B-55K also functions as a SUMO1 E3 ligase for TP53 which causes the latter to be sequestered in promyelocytic leukemia (PML) nuclear bodies thereby contributing to maximal inhibition of TP53 function. This chain is E1B 55 kDa protein, found in Canis lupus familiaris (Dog).